The sequence spans 134 residues: MAKKWLNKVKWDDNGLVPVIVQEAGSNDVLMFAFMNRDALLRTVELGEAVFWSRSRKRLWHKGEESGHVQKVHEIRLDCDEDVVLLKVTQVDSIACHTGRHSCFFQKFDGDADTGDWQTVEPVLKDPAQIYTKP.

Residue D78 participates in Mg(2+) binding. C79 provides a ligand contact to Zn(2+). Mg(2+) is bound by residues D80 and D82. C96 and C103 together coordinate Zn(2+).

The protein belongs to the PRA-CH family. Homodimer. The cofactor is Mg(2+). Zn(2+) is required as a cofactor.

The protein resides in the cytoplasm. The enzyme catalyses 1-(5-phospho-beta-D-ribosyl)-5'-AMP + H2O = 1-(5-phospho-beta-D-ribosyl)-5-[(5-phospho-beta-D-ribosylamino)methylideneamino]imidazole-4-carboxamide. It functions in the pathway amino-acid biosynthesis; L-histidine biosynthesis; L-histidine from 5-phospho-alpha-D-ribose 1-diphosphate: step 3/9. Its function is as follows. Catalyzes the hydrolysis of the adenine ring of phosphoribosyl-AMP. The chain is Phosphoribosyl-AMP cyclohydrolase from Cupriavidus taiwanensis (strain DSM 17343 / BCRC 17206 / CCUG 44338 / CIP 107171 / LMG 19424 / R1) (Ralstonia taiwanensis (strain LMG 19424)).